A 232-amino-acid chain; its full sequence is 5'-methylthioadenosine/S-adenosylhomocysteine nucleosidase (232 aa).

The active-site Proton acceptor is glutamate 12. Residues glycine 78, isoleucine 152, and 173-174 (ME) contribute to the substrate site. Residue aspartate 197 is the Proton donor of the active site.

The protein belongs to the PNP/UDP phosphorylase family. MtnN subfamily. In terms of assembly, homodimer.

The enzyme catalyses S-adenosyl-L-homocysteine + H2O = S-(5-deoxy-D-ribos-5-yl)-L-homocysteine + adenine. It catalyses the reaction S-methyl-5'-thioadenosine + H2O = 5-(methylsulfanyl)-D-ribose + adenine. The catalysed reaction is 5'-deoxyadenosine + H2O = 5-deoxy-D-ribose + adenine. The protein operates within amino-acid biosynthesis; L-methionine biosynthesis via salvage pathway; S-methyl-5-thio-alpha-D-ribose 1-phosphate from S-methyl-5'-thioadenosine (hydrolase route): step 1/2. Catalyzes the irreversible cleavage of the glycosidic bond in both 5'-methylthioadenosine (MTA) and S-adenosylhomocysteine (SAH/AdoHcy) to adenine and the corresponding thioribose, 5'-methylthioribose and S-ribosylhomocysteine, respectively. Also cleaves 5'-deoxyadenosine, a toxic by-product of radical S-adenosylmethionine (SAM) enzymes, into 5-deoxyribose and adenine. Thus, is required for in vivo function of the radical SAM enzymes biotin synthase and lipoic acid synthase, that are inhibited by 5'-deoxyadenosine accumulation. In Cronobacter sakazakii (strain ATCC BAA-894) (Enterobacter sakazakii), this protein is 5'-methylthioadenosine/S-adenosylhomocysteine nucleosidase.